Here is a 253-residue protein sequence, read N- to C-terminus: 5'/3'-nucleotidase SurE (253 aa).

Asp-8, Asp-9, Ser-39, and Asn-92 together coordinate a divalent metal cation.

This sequence belongs to the SurE nucleotidase family. A divalent metal cation is required as a cofactor.

It is found in the cytoplasm. It carries out the reaction a ribonucleoside 5'-phosphate + H2O = a ribonucleoside + phosphate. The enzyme catalyses a ribonucleoside 3'-phosphate + H2O = a ribonucleoside + phosphate. It catalyses the reaction [phosphate](n) + H2O = [phosphate](n-1) + phosphate + H(+). Functionally, nucleotidase with a broad substrate specificity as it can dephosphorylate various ribo- and deoxyribonucleoside 5'-monophosphates and ribonucleoside 3'-monophosphates with highest affinity to 3'-AMP. Also hydrolyzes polyphosphate (exopolyphosphatase activity) with the preference for short-chain-length substrates (P20-25). Might be involved in the regulation of dNTP and NTP pools, and in the turnover of 3'-mononucleotides produced by numerous intracellular RNases (T1, T2, and F) during the degradation of various RNAs. The chain is 5'/3'-nucleotidase SurE from Salmonella paratyphi A (strain AKU_12601).